A 416-amino-acid chain; its full sequence is Glutamyl-tRNA reductase (416 aa).

Substrate contacts are provided by residues 49 to 52 (TCNR), serine 105, 110 to 112 (EPQ), and glutamine 116. Catalysis depends on cysteine 50, which acts as the Nucleophile. 185–190 (GAGETI) contributes to the NADP(+) binding site.

This sequence belongs to the glutamyl-tRNA reductase family. Homodimer.

The catalysed reaction is (S)-4-amino-5-oxopentanoate + tRNA(Glu) + NADP(+) = L-glutamyl-tRNA(Glu) + NADPH + H(+). It participates in porphyrin-containing compound metabolism; protoporphyrin-IX biosynthesis; 5-aminolevulinate from L-glutamyl-tRNA(Glu): step 1/2. Its function is as follows. Catalyzes the NADPH-dependent reduction of glutamyl-tRNA(Glu) to glutamate 1-semialdehyde (GSA). This is Glutamyl-tRNA reductase from Shewanella amazonensis (strain ATCC BAA-1098 / SB2B).